Reading from the N-terminus, the 137-residue chain is Large ribosomal subunit protein uL16 (137 aa).

It belongs to the universal ribosomal protein uL16 family. Part of the 50S ribosomal subunit.

In terms of biological role, binds 23S rRNA and is also seen to make contacts with the A and possibly P site tRNAs. This chain is Large ribosomal subunit protein uL16, found in Alcanivorax borkumensis (strain ATCC 700651 / DSM 11573 / NCIMB 13689 / SK2).